The primary structure comprises 127 residues: HTH-type transcriptional regulator ImmR (127 aa).

Residues 1–12 (MSLGKRLKEARQ) show a composition bias toward basic and acidic residues. The tract at residues 1–22 (MSLGKRLKEARQKAGYTQKEAA) is disordered. In terms of domain architecture, HTH cro/C1-type spans 7–61 (LKEARQKAGYTQKEAAEKLNIGNNNLSNYERDYRDPDTDTLLKLSNLYNVSTDYL). Residues 18-37 (QKEAAEKLNIGNNNLSNYER) constitute a DNA-binding region (H-T-H motif).

The chain is HTH-type transcriptional regulator ImmR (immR) from Bacillus subtilis (strain 168).